The chain runs to 98 residues: NADH-ubiquinone oxidoreductase chain 4L (98 aa).

Transmembrane regions (helical) follow at residues 2–22 (LSIS…MLMF), 29–49 (SLLC…LIIL), and 61–81 (ILLL…LVMV).

Belongs to the complex I subunit 4L family. In terms of assembly, core subunit of respiratory chain NADH dehydrogenase (Complex I) which is composed of 45 different subunits.

It localises to the mitochondrion inner membrane. The catalysed reaction is a ubiquinone + NADH + 5 H(+)(in) = a ubiquinol + NAD(+) + 4 H(+)(out). Its function is as follows. Core subunit of the mitochondrial membrane respiratory chain NADH dehydrogenase (Complex I) which catalyzes electron transfer from NADH through the respiratory chain, using ubiquinone as an electron acceptor. Part of the enzyme membrane arm which is embedded in the lipid bilayer and involved in proton translocation. The sequence is that of NADH-ubiquinone oxidoreductase chain 4L (MT-ND4L) from Microcebus ravelobensis (Golden-brown mouse lemur).